Reading from the N-terminus, the 367-residue chain is Ferrochelatase (367 aa).

Residues His213 and Glu294 each coordinate Fe cation.

It belongs to the ferrochelatase family.

The protein resides in the cytoplasm. The enzyme catalyses heme b + 2 H(+) = protoporphyrin IX + Fe(2+). It functions in the pathway porphyrin-containing compound metabolism; protoheme biosynthesis; protoheme from protoporphyrin-IX: step 1/1. Catalyzes the ferrous insertion into protoporphyrin IX. The protein is Ferrochelatase of Polaromonas sp. (strain JS666 / ATCC BAA-500).